The chain runs to 223 residues: Small ribosomal subunit protein uS3 (223 aa).

A KH type-2 domain is found at Val-39–Arg-107.

Belongs to the universal ribosomal protein uS3 family. In terms of assembly, part of the 30S ribosomal subunit. Forms a tight complex with proteins S10 and S14.

Functionally, binds the lower part of the 30S subunit head. Binds mRNA in the 70S ribosome, positioning it for translation. The protein is Small ribosomal subunit protein uS3 of Francisella tularensis subsp. novicida (strain U112).